Here is an 874-residue protein sequence, read N- to C-terminus: Leucine--tRNA ligase (874 aa).

The 'HIGH' region motif lies at P47–H57. Positions K636–S640 match the 'KMSKS' region motif. Residue K639 coordinates ATP.

Belongs to the class-I aminoacyl-tRNA synthetase family.

It is found in the cytoplasm. It catalyses the reaction tRNA(Leu) + L-leucine + ATP = L-leucyl-tRNA(Leu) + AMP + diphosphate. In Acinetobacter baumannii (strain AB0057), this protein is Leucine--tRNA ligase.